We begin with the raw amino-acid sequence, 324 residues long: tRNA uridine(34) hydroxylase (324 aa).

The region spanning 145–239 (NDKKTIFIDM…YVHDARKNGL (95 aa)) is the Rhodanese domain. Cys-199 (cysteine persulfide intermediate) is an active-site residue.

It belongs to the TrhO family.

The enzyme catalyses uridine(34) in tRNA + AH2 + O2 = 5-hydroxyuridine(34) in tRNA + A + H2O. In terms of biological role, catalyzes oxygen-dependent 5-hydroxyuridine (ho5U) modification at position 34 in tRNAs. This Buchnera aphidicola subsp. Acyrthosiphon pisum (strain APS) (Acyrthosiphon pisum symbiotic bacterium) protein is tRNA uridine(34) hydroxylase.